The sequence spans 84 residues: MSQTENAVTSSSGAKRAYRKGNPLSDAEKQRLSVARKRASFKEVKVFLEPKYKAMLMQMCHEDGLTQAEVLTALIKSEAQKRCV.

Residues 1–13 are compositionally biased toward polar residues; the sequence is MSQTENAVTSSSG. The tract at residues 1–31 is disordered; the sequence is MSQTENAVTSSSGAKRAYRKGNPLSDAEKQR.

Its function is as follows. This protein is involved in the determination of copy number in gene replication. It binds to the repA promoter thus inhibiting the synthesis of the mRNA for the initiator protein repA. The polypeptide is Replication regulatory protein repA2 (repA2) (Escherichia coli O157:H7).